Here is a 142-residue protein sequence, read N- to C-terminus: uncharacterized protein (142 aa).

The next 3 helical transmembrane spans lie at 3-23 (LIFIAKMLQYSFLPFSPFNLL), 30-50 (SVSWFITYSVIVSIWGFAVWI), and 91-111 (FFLLYLFLTASNLIVQLAYFS).

It localises to the membrane. This is an uncharacterized protein from Saccharomyces cerevisiae (strain ATCC 204508 / S288c) (Baker's yeast).